Here is a 263-residue protein sequence, read N- to C-terminus: Endonuclease 8 (263 aa).

P2 functions as the Schiff-base intermediate with DNA in the catalytic mechanism. E3 functions as the Proton donor in the catalytic mechanism. The active-site Proton donor; for beta-elimination activity is the K53. Residues Q70, R125, and N169 each coordinate DNA. An FPG-type zinc finger spans residues 229 to 263 (KVFHRDGEACERCGGIIEKTTLSSRPFYWCPHCQK). R253 serves as the catalytic Proton donor; for delta-elimination activity.

The protein belongs to the FPG family. Requires Zn(2+) as cofactor.

The catalysed reaction is 2'-deoxyribonucleotide-(2'-deoxyribose 5'-phosphate)-2'-deoxyribonucleotide-DNA = a 3'-end 2'-deoxyribonucleotide-(2,3-dehydro-2,3-deoxyribose 5'-phosphate)-DNA + a 5'-end 5'-phospho-2'-deoxyribonucleoside-DNA + H(+). Functionally, involved in base excision repair of DNA damaged by oxidation or by mutagenic agents. Acts as a DNA glycosylase that recognizes and removes damaged bases. Has a preference for oxidized pyrimidines, such as thymine glycol, 5,6-dihydrouracil and 5,6-dihydrothymine. Has AP (apurinic/apyrimidinic) lyase activity and introduces nicks in the DNA strand. Cleaves the DNA backbone by beta-delta elimination to generate a single-strand break at the site of the removed base with both 3'- and 5'-phosphates. The sequence is that of Endonuclease 8 from Salmonella agona (strain SL483).